A 514-amino-acid polypeptide reads, in one-letter code: Alanine--glyoxylate aminotransferase 2, mitochondrial (514 aa).

The transit peptide at 1–41 (MTLIWRHLLRPLCLVTPAPRILEMRPFLNLGASWTSVTKLS) directs the protein to the mitochondrion. Position 71 is an N6-acetyllysine; alternate (Lys71). The residue at position 71 (Lys71) is an N6-succinyllysine; alternate. The residue at position 84 (Lys84) is an N6-acetyllysine. N6-acetyllysine; alternate is present on Lys262. Lys262 is modified (N6-succinyllysine; alternate). Lys304 is modified (N6-succinyllysine). Lys350 is modified (N6-(pyridoxal phosphate)lysine). The residue at position 420 (Lys420) is an N6-acetyllysine; alternate. Lys420 carries the post-translational modification N6-succinyllysine; alternate.

It belongs to the class-III pyridoxal-phosphate-dependent aminotransferase family. As to quaternary structure, homotetramer. The cofactor is pyridoxal 5'-phosphate.

It is found in the mitochondrion. It catalyses the reaction glyoxylate + L-alanine = glycine + pyruvate. It carries out the reaction (R)-3-amino-2-methylpropanoate + pyruvate = 2-methyl-3-oxopropanoate + L-alanine. The enzyme catalyses 3-oxopropanoate + L-alanine = beta-alanine + pyruvate. The catalysed reaction is 2-oxobutanoate + L-alanine = (2S)-2-aminobutanoate + pyruvate. It catalyses the reaction N(omega),N(omega)-dimethyl-L-arginine + pyruvate = 5-(3,3-dimethylguanidino)-2-oxopentanoate + L-alanine. It carries out the reaction N(omega),N('omega)-dimethyl-L-arginine + pyruvate = 5-(3,3'-dimethylguanidino)-2-oxopentanoate + L-alanine. The enzyme catalyses N(omega),N(omega)-dimethyl-L-arginine + glyoxylate = 5-(3,3-dimethylguanidino)-2-oxopentanoate + glycine. The catalysed reaction is N(omega),N('omega)-dimethyl-L-arginine + glyoxylate = 5-(3,3'-dimethylguanidino)-2-oxopentanoate + glycine. It catalyses the reaction N(omega)-methyl-L-arginine + pyruvate = 5-(3-methylguanidino)-2-oxopentanoate + L-alanine. It carries out the reaction N(omega)-methyl-L-arginine + glyoxylate = 5-(3-methylguanidino)-2-oxopentanoate + glycine. The enzyme catalyses L-ornithine + pyruvate = 5-amino-2-oxopentanoate + L-alanine. The catalysed reaction is L-ornithine + glyoxylate = 5-amino-2-oxopentanoate + glycine. It catalyses the reaction (2S)-2-aminobutanoate + glyoxylate = 2-oxobutanoate + glycine. It carries out the reaction N(omega),N(omega)-dimethyl-L-arginine + oxaloacetate = 5-(3,3-dimethylguanidino)-2-oxopentanoate + L-aspartate. The enzyme catalyses oxaloacetate + L-alanine = L-aspartate + pyruvate. The catalysed reaction is N(omega),N(omega)-dimethyl-L-arginine + 2-oxobutanoate = 5-(3,3-dimethylguanidino)-2-oxopentanoate + (2S)-2-aminobutanoate. It catalyses the reaction 2-oxopentanoate + N(omega),N(omega)-dimethyl-L-arginine = 5-(3,3-dimethylguanidino)-2-oxopentanoate + L-2-aminopentanoate. It carries out the reaction 2-oxohexanoate + N(omega),N(omega)-dimethyl-L-arginine = L-2-aminohexanoate + 5-(3,3-dimethylguanidino)-2-oxopentanoate. In terms of biological role, multifunctional aminotransferase with a broad substrate specificity. Catalyzes the conversion of glyoxylate to glycine using alanine as the amino donor. Catalyzes metabolism of not L- but the D-isomer of D-beta-aminoisobutyric acid to generate 2-methyl-3-oxopropanoate and alanine. Catalyzes the transfer of the amino group from beta-alanine to pyruvate to yield L-alanine and 3-oxopropanoate. Can metabolize NG-monomethyl-L-arginine (NMMA), asymmetric NG,NG-dimethyl-L-arginine (ADMA) and symmetric NG,N'G-dimethyl-L-arginine (SDMA). ADMA is a potent inhibitor of nitric-oxide (NO) synthase, and this activity provides mechanism through which the kidney regulates blood pressure. The sequence is that of Alanine--glyoxylate aminotransferase 2, mitochondrial (AGXT2) from Pongo abelii (Sumatran orangutan).